A 1177-amino-acid polypeptide reads, in one-letter code: Zinc finger CCCH domain-containing protein 6 (1177 aa).

A compositionally biased stretch (basic and acidic residues) spans 1–12; sequence MTDSEHAGHDRE. Disordered stretches follow at residues 1-137 and 179-206; these read MTDS…SKEY and QESSGSSFSKESGKKLRSKGSPPGTEYR. Positions 13–31 are enriched in acidic residues; it reads DGELEDGEIDDAGFEETQD. The stretch at 27–73 forms a coiled coil; the sequence is EETQDQEAKENEKQKNEKAYRKSRKKHKKEREKKKSKRRKHEKHKHN. The segment covering 32–46 has biased composition (basic and acidic residues); sequence QEAKENEKQKNEKAY. Positions 47-73 are enriched in basic residues; the sequence is RKSRKKHKKEREKKKSKRRKHEKHKHN. Over residues 179 to 188 the composition is skewed to low complexity; sequence QESSGSSFSK. C3H1-type zinc fingers lie at residues 271-297, 299-326, and 327-350; these read KGKQICKYFLEGRCIKGDHCKFNHDAE, EKKKEVCKYYLQGYCTKGENCIYMHSEF, and PCKFYHSGAKCYQGDKCKFSHDDL. A coiled-coil region spans residues 347-383; that stretch reads HDDLTKETRKLLDKVLNADEELVNEDERELEELRKRG. Disordered stretches follow at residues 383-416, 446-587, 622-654, 670-767, 780-826, 942-988, 1043-1101, and 1132-1162; these read GITPLPKPPPGVGLLPTPSEHFPFSDPEDDFETD, PPAF…ESMQ, QQQPPIARDTAHLGSGPNSSSRMTSHCPLSASG, RYQE…KKPH, PKKL…SERE, EQSG…SSRS, DPRD…PVDG, and LLRPPYSDPRQAREPGQASPTPDEETDDKPL. Residues 493-502 are compositionally biased toward low complexity; that stretch reads HPGSPGHHPC. Polar residues-rich tracts occupy residues 512 to 522 and 564 to 587; these read ENPSLLPSSSE and SSPASLYQQMPSEMQRSADSESMQ. Residues 713–728 are compositionally biased toward polar residues; the sequence is RTLQKQTGTLRNQQLP. Over residues 753 to 767 the composition is skewed to basic and acidic residues; the sequence is PRLRTVPRQDIKKPH. The segment covering 955–967 has biased composition (basic and acidic residues); it reads GDPRLQKNFDPRL. Polar residues-rich tracts occupy residues 1050-1064 and 1077-1093; these read LSATELSTISSGENT and KNQPSPGEVTVPQNTTA. A Phosphoserine modification is found at Ser-1150.

In Mus musculus (Mouse), this protein is Zinc finger CCCH domain-containing protein 6 (Zc3h6).